Here is a 172-residue protein sequence, read N- to C-terminus: MSLPNPADLIRQMAVDLRAHLARRAITEPRYIGIRTGGVWVAQALQEAMGDSSPMGTLDVSFYRDDFSQNGLHPQVRPSELPFEVEGQHLVLVDDVLMSGRTIRAALNELFDYGRPASVTLVCLLDLDAGELPIRPNVLGATLSLAAHERVKLTGPAPLALERQDLASRSAL.

Substrate is bound by residues 36–37 (TG), Arg77, 94–102 (DDVLMSGRT), and Val151. Positions 90–102 (LVLVDDVLMSGRT) match the PRPP-binding motif.

The protein belongs to the purine/pyrimidine phosphoribosyltransferase family. PyrR subfamily.

It carries out the reaction UMP + diphosphate = 5-phospho-alpha-D-ribose 1-diphosphate + uracil. In terms of biological role, regulates the transcription of the pyrimidine nucleotide (pyr) operon in response to exogenous pyrimidines. Functionally, also displays a weak uracil phosphoribosyltransferase activity which is not physiologically significant. The sequence is that of Bifunctional protein PyrR from Pseudomonas putida (Arthrobacter siderocapsulatus).